The primary structure comprises 262 residues: Phosphonates import ATP-binding protein PhnC (262 aa).

The 249-residue stretch at 5-253 folds into the ABC transporter domain; it reads IRVEKLAKTF…RFDHLYRSIN (249 aa). An ATP-binding site is contributed by 37-44; it reads GPSGSGKS.

The protein belongs to the ABC transporter superfamily. Phosphonates importer (TC 3.A.1.9.1) family. In terms of assembly, the complex is composed of two ATP-binding proteins (PhnC), two transmembrane proteins (PhnE) and a solute-binding protein (PhnD).

The protein resides in the cell inner membrane. The enzyme catalyses phosphonate(out) + ATP + H2O = phosphonate(in) + ADP + phosphate + H(+). In terms of biological role, part of the ABC transporter complex PhnCDE involved in phosphonates import. Responsible for energy coupling to the transport system. The chain is Phosphonates import ATP-binding protein PhnC from Shigella sonnei (strain Ss046).